The sequence spans 102 residues: Urease subunit beta (102 aa).

Belongs to the urease beta subunit family. As to quaternary structure, heterotrimer of UreA (gamma), UreB (beta) and UreC (alpha) subunits. Three heterotrimers associate to form the active enzyme.

Its subcellular location is the cytoplasm. It carries out the reaction urea + 2 H2O + H(+) = hydrogencarbonate + 2 NH4(+). It participates in nitrogen metabolism; urea degradation; CO(2) and NH(3) from urea (urease route): step 1/1. This chain is Urease subunit beta, found in Methylobacillus flagellatus (strain ATCC 51484 / DSM 6875 / VKM B-1610 / KT).